Consider the following 70-residue polypeptide: Large ribosomal subunit protein eL24 (70 aa).

4 residues coordinate Zn(2+): Cys-7, Cys-10, Cys-33, and Cys-37. A C4-type zinc finger spans residues 7–37 (CSFCGYEIEPGKGKMVVEKDGTVLYFCSSKC).

Belongs to the eukaryotic ribosomal protein eL24 family. Part of the 50S ribosomal subunit. Forms a cluster with proteins L3 and L14. The cofactor is Zn(2+).

Functionally, binds to the 23S rRNA. The sequence is that of Large ribosomal subunit protein eL24 from Methanocaldococcus jannaschii (strain ATCC 43067 / DSM 2661 / JAL-1 / JCM 10045 / NBRC 100440) (Methanococcus jannaschii).